We begin with the raw amino-acid sequence, 70 residues long: Beta-defensin 107 (70 aa).

The first 26 residues, 1–26 (MPGAMKIFVFILAALILLAQIFQART), serve as a signal peptide directing secretion. 2 disulfide bridges follow: Cys-41–Cys-55 and Cys-45–Cys-64.

This sequence belongs to the beta-defensin family. As to expression, specifically expressed in testis.

Its subcellular location is the secreted. Its function is as follows. Has antibacterial activity. The protein is Beta-defensin 107 (DEFB107A) of Homo sapiens (Human).